The primary structure comprises 187 residues: Adenylate kinase (187 aa).

Gly12 to Thr17 contributes to the ATP binding site. Residues Ser32–Val61 form an NMP region. AMP is bound by residues Thr33, Arg38, Asp59–Val61, Gly87–Arg90, and Gln94. Residues Gly128 to Asp134 form an LID region. Residue Arg129 participates in ATP binding. 2 residues coordinate AMP: Arg131 and Arg142. Arg170 lines the ATP pocket.

It belongs to the adenylate kinase family. As to quaternary structure, monomer.

The protein localises to the cytoplasm. The catalysed reaction is AMP + ATP = 2 ADP. It functions in the pathway purine metabolism; AMP biosynthesis via salvage pathway; AMP from ADP: step 1/1. Catalyzes the reversible transfer of the terminal phosphate group between ATP and AMP. Plays an important role in cellular energy homeostasis and in adenine nucleotide metabolism. This is Adenylate kinase from Leuconostoc mesenteroides subsp. mesenteroides (strain ATCC 8293 / DSM 20343 / BCRC 11652 / CCM 1803 / JCM 6124 / NCDO 523 / NBRC 100496 / NCIMB 8023 / NCTC 12954 / NRRL B-1118 / 37Y).